A 179-amino-acid polypeptide reads, in one-letter code: Large ribosomal subunit protein uL6 (179 aa).

This sequence belongs to the universal ribosomal protein uL6 family. In terms of assembly, part of the 50S ribosomal subunit.

Functionally, this protein binds to the 23S rRNA, and is important in its secondary structure. It is located near the subunit interface in the base of the L7/L12 stalk, and near the tRNA binding site of the peptidyltransferase center. The chain is Large ribosomal subunit protein uL6 from Prochlorococcus marinus (strain MIT 9313).